Consider the following 397-residue polypeptide: Monooxygenase 1 (397 aa).

This sequence belongs to the 3-hydroxybenzoate 6-hydroxylase family. As to quaternary structure, monomer. FAD serves as cofactor. Expressed in seedlings, roots, leaves, flowers and siliques.

In Arabidopsis thaliana (Mouse-ear cress), this protein is Monooxygenase 1.